The primary structure comprises 316 residues: Transaldolase (316 aa).

Residue Lys-131 is the Schiff-base intermediate with substrate of the active site.

The protein belongs to the transaldolase family. Type 1 subfamily. As to quaternary structure, homodimer.

It is found in the cytoplasm. The enzyme catalyses D-sedoheptulose 7-phosphate + D-glyceraldehyde 3-phosphate = D-erythrose 4-phosphate + beta-D-fructose 6-phosphate. It functions in the pathway carbohydrate degradation; pentose phosphate pathway; D-glyceraldehyde 3-phosphate and beta-D-fructose 6-phosphate from D-ribose 5-phosphate and D-xylulose 5-phosphate (non-oxidative stage): step 2/3. Transaldolase is important for the balance of metabolites in the pentose-phosphate pathway. In Chromohalobacter salexigens (strain ATCC BAA-138 / DSM 3043 / CIP 106854 / NCIMB 13768 / 1H11), this protein is Transaldolase.